The sequence spans 1615 residues: Ferredoxin-dependent glutamate synthase, chloroplastic (1615 aa).

The transit peptide at 1–52 directs the protein to the chloroplast; it reads MATLPRAAAAAAPSPAAALLPLPRAAPLLAGRAAARSAARRLRARGTRAPPL. Residue C97 is the Nucleophile of the active site. Residues 97-496 form the Glutamine amidotransferase type-2 domain; it reads CGVGFVANLK…PGMMITVDLQ (400 aa). Residue 1175–1232 participates in FMN binding; the sequence is LSETHQTLIQNGLRERVVLRVDGGFRSGLDVLMAAAMGADEYGFGSVAMIATGCVMAR. [3Fe-4S] cluster is bound by residues C1228, C1234, and C1239.

This sequence belongs to the glutamate synthase family. The cofactor is [3Fe-4S] cluster. FAD is required as a cofactor. It depends on FMN as a cofactor. Expressed in leaf blades and at lower levels in roots.

It localises to the plastid. The protein localises to the chloroplast. The catalysed reaction is 2 oxidized [2Fe-2S]-[ferredoxin] + 2 L-glutamate = L-glutamine + 2 reduced [2Fe-2S]-[ferredoxin] + 2-oxoglutarate + 2 H(+). The protein operates within amino-acid biosynthesis; L-glutamate biosynthesis via GLT pathway; L-glutamate from 2-oxoglutarate and L-glutamine (ferredoxin route): step 1/1. It participates in energy metabolism; nitrogen metabolism. Its function is as follows. Involved in glutamate biosynthesis in leaf. Required for the reassimilation of ammonium ions generated during photorespiration. The chain is Ferredoxin-dependent glutamate synthase, chloroplastic (GLU) from Oryza sativa subsp. japonica (Rice).